A 307-amino-acid chain; its full sequence is Cyclin-dependent kinase 5 activator 1 (307 aa).

The N-myristoyl glycine moiety is linked to residue Gly2. Ser8 is subject to Phosphoserine; by CDK5. Residues 97-136 are disordered; that stretch reads TFAQPPPAQPPAPPASQLSGSQTGGSSSVKKAPHPAVTSA. Pro residues predominate over residues 100–110; sequence QPPPAQPPAPP. Low complexity predominate over residues 111 to 124; it reads ASQLSGSQTGGSSS. Position 138 is a phosphothreonine; by CDK5 (Thr138).

Belongs to the cyclin-dependent kinase 5 activator family. In terms of assembly, heterodimer composed of a catalytic subunit CDK5 and a regulatory subunit CDK5R1 (p25) and macromolecular complex composed of at least CDK5, CDK5R1 (p35) and CDK5RAP1 or CDK5RAP2 or CDK5RAP3. Only the heterodimer shows kinase activity. Interacts with EPHA4 and NGEF; may mediate the activation of NGEF by EPHA4. Interacts with RASGRF2. The complex p35/CDK5 interacts with CLOCK. In terms of processing, the p35 form is proteolytically cleaved by calpain, giving rise to the p25 form. P35 has a 5 to 10 fold shorter half-life compared to p25. The conversion results in deregulation of the CDK5 kinase: p25/CDK5 kinase displays an increased and altered tau phosphorylation in comparison to the p35/CDK5 kinase in vivo. Myristoylated. A proper myristoylation signal is essential for the proper distribution of p35. Post-translationally, ubiquitinated, leading to its degradation: degradation of p35 by proteasome results in down-regulation of CDK5 activity. During this process, CDK5 phosphorylates p35 and induces its ubiquitination and subsequent degradation. Ubiquitinated by the CRL2(FEM1B) complex, which recognizes the -Gly-Leu-Asp-Arg C-degron at the C-terminus, leading to its degradation. In terms of processing, phosphorylation at Ser-8 and Thr-138 by CDK5 prevents calpain-mediated proteolysis. In terms of tissue distribution, brain and neuron specific.

It localises to the cell membrane. It is found in the cell projection. The protein localises to the neuron projection. The protein resides in the nucleus. Its subcellular location is the cytoplasm. It localises to the perinuclear region. It is found in the perikaryon. In terms of biological role, p35 is a neuron specific activator of CDK5. The complex p35/CDK5 is required for neurite outgrowth and cortical lamination. Involved in dendritic spine morphogenesis by mediating the EFNA1-EPHA4 signaling. Activator of TPKII. The complex p35/CDK5 participates in the regulation of the circadian clock by modulating the function of CLOCK protein: phosphorylates CLOCK at 'Thr-451' and 'Thr-461' and regulates the transcriptional activity of the CLOCK-BMAL1 heterodimer in association with altered stability and subcellular distribution. The protein is Cyclin-dependent kinase 5 activator 1 (CDK5R1) of Homo sapiens (Human).